The following is a 347-amino-acid chain: Probable inactive UDP-arabinopyranose mutase 2 (347 aa).

N-linked (Glc...) arginine glycosylation is present at Arg-145.

This sequence belongs to the RGP family. As to quaternary structure, heteromers with UAM1 and UAM3. Is not reversibly glycosylated in vitro by UDP-glucose, UDP-xylose and UDP-galactose.

Its subcellular location is the golgi apparatus. In terms of biological role, probable inactive UDP-L-arabinose mutase. Inactive in vitro, but associates with UAM1 and UAM3. The protein is Probable inactive UDP-arabinopyranose mutase 2 of Oryza sativa subsp. japonica (Rice).